The chain runs to 210 residues: Outer-membrane lipoprotein LolB (210 aa).

The signal sequence occupies residues 1-29; that stretch reads MSLISNNEERSLRVRYCIAIALSALLISG. Cys-30 carries N-palmitoyl cysteine lipidation. A lipid anchor (S-diacylglycerol cysteine) is attached at Cys-30.

This sequence belongs to the LolB family. In terms of assembly, monomer.

It localises to the cell outer membrane. Plays a critical role in the incorporation of lipoproteins in the outer membrane after they are released by the LolA protein. This chain is Outer-membrane lipoprotein LolB, found in Coxiella burnetii (strain RSA 493 / Nine Mile phase I).